We begin with the raw amino-acid sequence, 665 residues long: Coiled-coil domain-containing protein 138 (665 aa).

The residue at position 48 (T48) is a Phosphothreonine. A Phosphoserine modification is found at S49. The stretch at 198 to 323 (QQKFAEELQK…YEFMTIQRLK (126 aa)) forms a coiled coil. S469 carries the post-translational modification Phosphoserine.

In Homo sapiens (Human), this protein is Coiled-coil domain-containing protein 138 (CCDC138).